Reading from the N-terminus, the 459-residue chain is Putrescine aminotransferase (459 aa).

Residues 150-151 (GT) and Gln-274 contribute to the pyridoxal 5'-phosphate site. The residue at position 300 (Lys-300) is an N6-(pyridoxal phosphate)lysine. Thr-332 is a binding site for pyridoxal 5'-phosphate.

The protein belongs to the class-III pyridoxal-phosphate-dependent aminotransferase family. Putrescine aminotransferase subfamily. The cofactor is pyridoxal 5'-phosphate.

It carries out the reaction an alkane-alpha,omega-diamine + 2-oxoglutarate = an omega-aminoaldehyde + L-glutamate. The enzyme catalyses putrescine + 2-oxoglutarate = 1-pyrroline + L-glutamate + H2O. It catalyses the reaction cadaverine + 2-oxoglutarate = 5-aminopentanal + L-glutamate. It functions in the pathway amine and polyamine degradation; putrescine degradation; 4-aminobutanal from putrescine (transaminase route): step 1/1. In terms of biological role, catalyzes the aminotransferase reaction from putrescine to 2-oxoglutarate, leading to glutamate and 4-aminobutanal, which spontaneously cyclizes to form 1-pyrroline. This is the first step in one of two pathways for putrescine degradation, where putrescine is converted into 4-aminobutanoate (gamma-aminobutyrate or GABA) via 4-aminobutanal. Also functions as a cadaverine transaminase in a a L-lysine degradation pathway to succinate that proceeds via cadaverine, glutarate and L-2-hydroxyglutarate. This is Putrescine aminotransferase from Shigella boydii serotype 4 (strain Sb227).